We begin with the raw amino-acid sequence, 324 residues long: tRNA N6-adenosine threonylcarbamoyltransferase (324 aa).

Positions 107, 111, and 127 each coordinate Fe cation. Substrate-binding positions include tyrosine 127–glycine 131, aspartate 159, glycine 172, glutamate 176, and asparagine 257. Aspartate 285 is a Fe cation binding site.

Belongs to the KAE1 / TsaD family. As to quaternary structure, monomer. Component of the KEOPS complex that consists of Kae1, Bud32, Cgi121 and Pcc1; the whole complex dimerizes. Fe(2+) is required as a cofactor.

The protein localises to the cytoplasm. It catalyses the reaction L-threonylcarbamoyladenylate + adenosine(37) in tRNA = N(6)-L-threonylcarbamoyladenosine(37) in tRNA + AMP + H(+). Required for the formation of a threonylcarbamoyl group on adenosine at position 37 (t(6)A37) in tRNAs that read codons beginning with adenine. Is a component of the KEOPS complex that is probably involved in the transfer of the threonylcarbamoyl moiety of threonylcarbamoyl-AMP (TC-AMP) to the N6 group of A37. Kae1 likely plays a direct catalytic role in this reaction, but requires other protein(s) of the complex to fulfill this activity. The sequence is that of tRNA N6-adenosine threonylcarbamoyltransferase from Pyrococcus horikoshii (strain ATCC 700860 / DSM 12428 / JCM 9974 / NBRC 100139 / OT-3).